Reading from the N-terminus, the 92-residue chain is Probable Fe(2+)-trafficking protein (92 aa).

Belongs to the Fe(2+)-trafficking protein family.

Its function is as follows. Could be a mediator in iron transactions between iron acquisition and iron-requiring processes, such as synthesis and/or repair of Fe-S clusters in biosynthetic enzymes. In Shewanella pealeana (strain ATCC 700345 / ANG-SQ1), this protein is Probable Fe(2+)-trafficking protein.